A 364-amino-acid polypeptide reads, in one-letter code: Probable dual-specificity RNA methyltransferase RlmN (364 aa).

Catalysis depends on glutamate 107, which acts as the Proton acceptor. In terms of domain architecture, Radical SAM core spans 113–346; sequence HNYGNSVCVT…VTIRREHGHD (234 aa). Cysteine 120 and cysteine 351 are oxidised to a cystine. [4Fe-4S] cluster contacts are provided by cysteine 127, cysteine 131, and cysteine 134. S-adenosyl-L-methionine is bound by residues 177–178, serine 209, 232–234, and asparagine 308; these read GE and SLH. The active-site S-methylcysteine intermediate is cysteine 351.

Belongs to the radical SAM superfamily. RlmN family. [4Fe-4S] cluster is required as a cofactor.

It localises to the cytoplasm. It carries out the reaction adenosine(2503) in 23S rRNA + 2 reduced [2Fe-2S]-[ferredoxin] + 2 S-adenosyl-L-methionine = 2-methyladenosine(2503) in 23S rRNA + 5'-deoxyadenosine + L-methionine + 2 oxidized [2Fe-2S]-[ferredoxin] + S-adenosyl-L-homocysteine. The catalysed reaction is adenosine(37) in tRNA + 2 reduced [2Fe-2S]-[ferredoxin] + 2 S-adenosyl-L-methionine = 2-methyladenosine(37) in tRNA + 5'-deoxyadenosine + L-methionine + 2 oxidized [2Fe-2S]-[ferredoxin] + S-adenosyl-L-homocysteine. Specifically methylates position 2 of adenine 2503 in 23S rRNA and position 2 of adenine 37 in tRNAs. This Geobacillus thermodenitrificans (strain NG80-2) protein is Probable dual-specificity RNA methyltransferase RlmN.